The primary structure comprises 503 residues: Lysine--tRNA ligase (503 aa).

Residues E414 and E421 each contribute to the Mg(2+) site.

This sequence belongs to the class-II aminoacyl-tRNA synthetase family. As to quaternary structure, homodimer. The cofactor is Mg(2+).

The protein localises to the cytoplasm. It catalyses the reaction tRNA(Lys) + L-lysine + ATP = L-lysyl-tRNA(Lys) + AMP + diphosphate. This Neisseria meningitidis serogroup A / serotype 4A (strain DSM 15465 / Z2491) protein is Lysine--tRNA ligase.